Reading from the N-terminus, the 281-residue chain is 2-dehydro-3-deoxyphosphooctonate aldolase (281 aa).

Belongs to the KdsA family.

Its subcellular location is the cytoplasm. The catalysed reaction is D-arabinose 5-phosphate + phosphoenolpyruvate + H2O = 3-deoxy-alpha-D-manno-2-octulosonate-8-phosphate + phosphate. The protein operates within carbohydrate biosynthesis; 3-deoxy-D-manno-octulosonate biosynthesis; 3-deoxy-D-manno-octulosonate from D-ribulose 5-phosphate: step 2/3. Its pathway is bacterial outer membrane biogenesis; lipopolysaccharide biosynthesis. This is 2-dehydro-3-deoxyphosphooctonate aldolase from Pseudomonas putida (strain GB-1).